The following is an 803-amino-acid chain: Volume-regulated anion channel subunit LRRC8B (803 aa).

Over 1 to 25 the chain is Cytoplasmic; it reads MITLTELKCLADAQSSYHILKPWWD. A helical membrane pass occupies residues 26 to 46; that stretch reads VFWYYITLIMLLVAVLAGALQ. Residues 47–119 are Extracellular-facing; the sequence is LTQSRVLCCL…YEKQLHWFAK (73 aa). 2 disulfides stabilise this stretch: Cys55–Cys304 and Cys109–Cys289. N-linked (GlcNAc...) asparagine glycosylation occurs at Asn78. The chain crosses the membrane as a helical span at residues 120–140; sequence FFPYLVLLHTLIFAACSNFWL. The Cytoplasmic segment spans residues 141–261; that stretch reads HYPSTSSRLE…DIIYRVYLKQ (121 aa). Phosphoserine occurs at positions 186 and 196. Residues 262-282 traverse the membrane as a helical segment; sequence IIVKVILFVLIITYVPYFLSY. Over 283-307 the chain is Extracellular; that stretch reads ITLEIDCSIDVQAFTGYKRYQCVYS. Residues 308–328 form a helical membrane-spanning segment; the sequence is LAEIFKVLASFYVILVMLYGL. Over 329 to 803 the chain is Cytoplasmic; sequence TSSYSLWWML…ERLQTCLDKC (475 aa). LRR repeat units lie at residues 415-439, 440-462, 464-486, 488-509, 511-532, 539-559, 562-582, 586-607, 609-630, 634-655, 657-678, 680-701, 703-724, 726-747, and 749-771; these read VKNS…VFEL, TEME…VAQL, NLRE…AFLE, NLRI…VFHL, NLKE…LHLE, NLRT…VTDL, SLQK…NNLK, NLKS…IFSL, NLHE…ISFQ, SLSC…IGAL, NLEQ…LFLC, KLHY…IQYL, NLQY…LFQC, KLQC…VGEL, and NLTH…EGCQ.

It belongs to the LRRC8 family. As to quaternary structure, heterohexamer; oligomerizes with other LRRC8 proteins (LRRC8A, LRRC8C, LRRC8D and/or LRRC8E) to form a heterohexamer. In vivo, the subunit composition may depend primarily on expression levels, and heterooligomeric channels containing various proportions of the different LRRC8 proteins may coexist.

It localises to the cell membrane. The protein resides in the endoplasmic reticulum membrane. The catalysed reaction is chloride(in) = chloride(out). It catalyses the reaction iodide(out) = iodide(in). It carries out the reaction taurine(out) = taurine(in). Functionally, non-essential component of the volume-regulated anion channel (VRAC, also named VSOAC channel), an anion channel required to maintain a constant cell volume in response to extracellular or intracellular osmotic changes. The VRAC channel conducts iodide better than chloride and can also conduct organic osmolytes like taurine. Channel activity requires LRRC8A plus at least one other family member (LRRC8B, LRRC8C, LRRC8D or LRRC8E); channel characteristics depend on the precise subunit composition. The protein is Volume-regulated anion channel subunit LRRC8B of Mus musculus (Mouse).